The sequence spans 234 residues: Leucyl/phenylalanyl-tRNA--protein transferase (234 aa).

This sequence belongs to the L/F-transferase family.

The protein resides in the cytoplasm. It catalyses the reaction N-terminal L-lysyl-[protein] + L-leucyl-tRNA(Leu) = N-terminal L-leucyl-L-lysyl-[protein] + tRNA(Leu) + H(+). The catalysed reaction is N-terminal L-arginyl-[protein] + L-leucyl-tRNA(Leu) = N-terminal L-leucyl-L-arginyl-[protein] + tRNA(Leu) + H(+). It carries out the reaction L-phenylalanyl-tRNA(Phe) + an N-terminal L-alpha-aminoacyl-[protein] = an N-terminal L-phenylalanyl-L-alpha-aminoacyl-[protein] + tRNA(Phe). Its function is as follows. Functions in the N-end rule pathway of protein degradation where it conjugates Leu, Phe and, less efficiently, Met from aminoacyl-tRNAs to the N-termini of proteins containing an N-terminal arginine or lysine. The chain is Leucyl/phenylalanyl-tRNA--protein transferase from Salmonella arizonae (strain ATCC BAA-731 / CDC346-86 / RSK2980).